Consider the following 345-residue polypeptide: Uroporphyrinogen decarboxylase (345 aa).

Substrate is bound by residues 27-31 (RQAGR), Phe46, Asp76, Tyr152, Ser207, and His321.

This sequence belongs to the uroporphyrinogen decarboxylase family. In terms of assembly, homodimer.

The protein resides in the cytoplasm. The catalysed reaction is uroporphyrinogen III + 4 H(+) = coproporphyrinogen III + 4 CO2. Its pathway is porphyrin-containing compound metabolism; protoporphyrin-IX biosynthesis; coproporphyrinogen-III from 5-aminolevulinate: step 4/4. Functionally, catalyzes the decarboxylation of four acetate groups of uroporphyrinogen-III to yield coproporphyrinogen-III. The sequence is that of Uroporphyrinogen decarboxylase from Staphylococcus aureus (strain USA300 / TCH1516).